An 85-amino-acid polypeptide reads, in one-letter code: MTNAELFGEGINLMISGMGFVLLFLIVLIYAISFISTLINKYFPEPIPAPVAKPVPSAVPTDNLDHLRPVIAAAIAHHRRQQGLK.

Residues 15–35 (ISGMGFVLLFLIVLIYAISFI) form a helical membrane-spanning segment.

Belongs to the OadG family. In terms of assembly, heterotrimer of an alpha, a beta and a gamma subunit. The cofactor is Na(+).

It is found in the cell membrane. The catalysed reaction is oxaloacetate + 2 Na(+)(in) + H(+) = pyruvate + 2 Na(+)(out) + CO2. Its function is as follows. Catalyzes the decarboxylation of oxaloacetate coupled to Na(+) translocation. The polypeptide is Probable oxaloacetate decarboxylase gamma chain (Actinobacillus pleuropneumoniae serotype 5b (strain L20)).